The sequence spans 166 residues: Large ribosomal subunit protein uL10 (166 aa).

This sequence belongs to the universal ribosomal protein uL10 family. In terms of assembly, part of the ribosomal stalk of the 50S ribosomal subunit. The N-terminus interacts with L11 and the large rRNA to form the base of the stalk. The C-terminus forms an elongated spine to which L12 dimers bind in a sequential fashion forming a multimeric L10(L12)X complex.

Forms part of the ribosomal stalk, playing a central role in the interaction of the ribosome with GTP-bound translation factors. This is Large ribosomal subunit protein uL10 from Streptococcus agalactiae serotype III (strain NEM316).